Consider the following 539-residue polypeptide: GMP synthase [glutamine-hydrolyzing] (539 aa).

Positions 4 to 202 constitute a Glutamine amidotransferase type-1 domain; that stretch reads KILILDFGSQ…VLQIAGCKPD (199 aa). Cys-81 functions as the Nucleophile in the catalytic mechanism. Catalysis depends on residues His-176 and Glu-178. The region spanning 203–395 is the GMPS ATP-PPase domain; the sequence is WVMRDHIEEA…LGLPPEMVYR (193 aa). 230-236 is a binding site for ATP; it reads SGGVDSS.

In terms of assembly, homodimer.

It carries out the reaction XMP + L-glutamine + ATP + H2O = GMP + L-glutamate + AMP + diphosphate + 2 H(+). It functions in the pathway purine metabolism; GMP biosynthesis; GMP from XMP (L-Gln route): step 1/1. In terms of biological role, catalyzes the synthesis of GMP from XMP. This is GMP synthase [glutamine-hydrolyzing] from Cupriavidus taiwanensis (strain DSM 17343 / BCRC 17206 / CCUG 44338 / CIP 107171 / LMG 19424 / R1) (Ralstonia taiwanensis (strain LMG 19424)).